A 146-amino-acid polypeptide reads, in one-letter code: 2S sulfur-rich seed storage protein 1 (146 aa).

The signal sequence occupies residues 1–22 (MAKISVAAAALLVLMALGHATA). Residues 23–36 (FRATVTTTVVEEEN) constitute a propeptide that is removed on maturation. Residue glutamine 37 is modified to Pyrrolidone carboxylic acid. 4 cysteine pairs are disulfide-bonded: cysteine 40–cysteine 92, cysteine 53–cysteine 81, cysteine 82–cysteine 130, and cysteine 94–cysteine 137. Positions 65 to 69 (PYQTM) are excised as a propeptide. Residues 143–146 (IAGF) constitute a propeptide that is removed on maturation.

The protein belongs to the 2S seed storage albumins family. In terms of assembly, the mature protein consists of a small and a large chain linked by disulfide bonds.

Its function is as follows. This is a 2S seed storage protein. This is 2S sulfur-rich seed storage protein 1 (BE2S1) from Bertholletia excelsa (Brazil nut).